A 192-amino-acid chain; its full sequence is Small ribosomal subunit protein uS4c-2 (192 aa).

The S4 RNA-binding domain maps to 91-155; it reads TRLDHLVYRA…PKPPEYLPPY (65 aa).

This sequence belongs to the universal ribosomal protein uS4 family. Part of the 30S ribosomal subunit. Contacts protein S5. The interaction surface between S4 and S5 is involved in control of translational fidelity.

It localises to the plastid. Its subcellular location is the chloroplast. Its function is as follows. One of the primary rRNA binding proteins, it binds directly to 16S rRNA where it nucleates assembly of the body of the 30S subunit. Functionally, with S5 and S12 plays an important role in translational accuracy. This Cyanidium caldarium (Red alga) protein is Small ribosomal subunit protein uS4c-2.